An 867-amino-acid chain; its full sequence is Nitrate reductase [NADPH] (867 aa).

The disordered stretch occupies residues 38–58; that stretch reads DIPLPPPSKEPTEVLSIDKPT. Mo-molybdopterin is bound at residue Cys-152. A Cytochrome b5 heme-binding domain is found at 514-589; sequence NRIIDLQEFK…MPDYHIGTMD (76 aa). Heme-binding residues include His-549 and His-572. The FAD-binding FR-type domain maps to 615–726; the sequence is KSWTKATLVK…KGPTGRFEYL (112 aa). FAD contacts are provided by residues 669–672, 686–690, Phe-691, 700–702, and Thr-753; these read RSYT, LVKIY, and KMT. An NADP(+)-binding site is contributed by 837-846; the sequence is MVLICGPEAM.

The protein belongs to the nitrate reductase family. As to quaternary structure, homodimer. FAD serves as cofactor. It depends on heme as a cofactor. Mo-molybdopterin is required as a cofactor.

The catalysed reaction is nitrite + NADP(+) + H2O = nitrate + NADPH + H(+). In terms of biological role, nitrate reductase is a key enzyme involved in the first step of nitrate assimilation in plants, fungi and bacteria. In Aspergillus niger, this protein is Nitrate reductase [NADPH] (niaD).